Here is a 651-residue protein sequence, read N- to C-terminus: Ion-translocating oxidoreductase complex subunit C (651 aa).

4Fe-4S ferredoxin-type domains follow at residues 368-398 and 408-437; these read EYAE…QQLY and KSEE…IQYF. 8 residues coordinate [4Fe-4S] cluster: C378, C381, C384, C388, C417, C420, C423, and C427. Composition is skewed to basic and acidic residues over residues 465 to 477 and 485 to 513; these read QARM…ERKA and ARRE…KANE. 2 disordered regions span residues 465-565 and 583-624; these read QARM…QPTD and LAQA…DPKK. Composition is skewed to polar residues over residues 554–564 and 587–600; these read VENQEQQTQPT and NSTS…QTAE. The span at 602–614 shows a compositional bias: basic and acidic residues; sequence EVEKTKSAVEKTQ.

It belongs to the 4Fe4S bacterial-type ferredoxin family. RnfC subfamily. As to quaternary structure, the complex is composed of six subunits: RnfA, RnfB, RnfC, RnfD, RnfE and RnfG. Requires [4Fe-4S] cluster as cofactor.

The protein resides in the cell inner membrane. In terms of biological role, part of a membrane-bound complex that couples electron transfer with translocation of ions across the membrane. The protein is Ion-translocating oxidoreductase complex subunit C of Haemophilus influenzae (strain PittEE).